We begin with the raw amino-acid sequence, 1133 residues long: MSPTQWDFPVELCCRPMAFVTLTGLDVVYNAVHRAVWDAFCANRRADRVPISFKVLPGDHEYPKCRPKRTSYEWYIPKGILKTGWMNKHLNLVPALVVVFYELDWDEPQWKEKQSECATRVEIVRQSLQGRNTKVAVVLIQKKTPLPPGEDVIASERAAALCNACELSGKSLFVLPHTDHLVGYIIRLENAFYEHAQTYYYTEIRRVKSHKEFLNKTTHQLLFVRHQFKIAFFSELKQDTQNALKNYRTAYNLVHELRAHETNILEIKTMAGFINYKICRLCFQHNTPLDAIAQFRKHIDLCKKKIGSAELAFEHAAWMSKQFQAFGDLFDEAIKLGLTAIQTQNPGFYYQQAAYYAQERKQLAKALCNHEASVTYPNPDPLETQAGVLDFYGQRSWRQGVLSFDLSDPEKEKVGILAIQLKERSVVHSEVIITLLSNAVAQFKKYKCPRMKSHLMVQMGEEYYYAKDYTKALKLLDYVMCDYRSEGWWTLLTSILTTALKCSYLMAQLKDYITYSLELLGRASTLKDDQKSRIEKNLINVLMNESPDPEPDCDILAVKTAQKLWVDRISLAGSNVFTIGVQDFVPFVQCKAKFHAPSFHVDVPVQFDVYLKADCPHPIRFSKLCISFNNQEYNQFCVIEEASKASDVLENLTQGKMCLVPGKTRKFLFKFVAKTEDVGKKIEITSVDLVLGSEAGRCVVLNWQGGGGDAASAQEALQASRSFKRRPRLPDSEVHWDGIVIQASTMIISRVPNISVHLRHDPPALTNEMYCLVVTVQSHEKSPIRDVKLTAGLKPGQDANLTQKTHVTLHGTELCDESYPALLTDIPIGDLQPGEQLEKAVYVRCGTVGSRMFLVYVSYLINTAIEGKETVCKCHKDETVTIETVFPFDVAVKFVSTKFEHLERVYADIPFLLMTDLLSASPWALTIVSSELQLAPSMTPVDQLESQVDRVVLQTGESASECFCLRCPSVGNVEGGVATGHYVISWKRTSATDGVPVISTVITLPHVIVENIPLHVNADLPSFGRVRESLPVRYHLQNKTDLVQDVEISVEPSDAFMFSGLKQIRLRILPGTEQEMLYNFYPLMAGYQQLPSLNINLLRFPNFTNQLLRRFIPTSIFVKPQGRLVDDASIAAA.

The residue at position 245 (lysine 245) is an N6-acetyllysine.

The protein belongs to the TRAPPC11 family. As to quaternary structure, component of the multisubunit TRAPP (transport protein particle) complex, which includes at least TRAPPC2, TRAPPC2L, TRAPPC3, TRAPPC3L, TRAPPC4, TRAPPC5, TRAPPC8, TRAPPC9, TRAPPC10, TRAPPC11 and TRAPPC12.

It is found in the golgi apparatus. The protein resides in the cis-Golgi network. In terms of biological role, involved in endoplasmic reticulum to Golgi apparatus trafficking at a very early stage. In Bos taurus (Bovine), this protein is Trafficking protein particle complex subunit 11 (TRAPPC11).